The primary structure comprises 348 residues: Quinone oxidoreductase-like protein 1 (348 aa).

The protein belongs to the zinc-containing alcohol dehydrogenase family. Quinone oxidoreductase subfamily. In terms of assembly, component of the FERRY complex composed of five subunits, TBCK, PPP1R21, FERRY3, CRYZL1 and GATD1 with a ratio of 1:2:1:2:4, respectively.

The protein resides in the early endosome. In terms of biological role, component of the FERRY complex (Five-subunit Endosomal Rab5 and RNA/ribosome intermediary). The FERRY complex directly interacts with mRNAs and RAB5A, and functions as a RAB5A effector involved in the localization and the distribution of specific mRNAs most likely by mediating their endosomal transport. The complex recruits mRNAs and ribosomes to early endosomes through direct mRNA-interaction. The sequence is that of Quinone oxidoreductase-like protein 1 (Cryzl1) from Mus musculus (Mouse).